Reading from the N-terminus, the 152-residue chain is FMN reductase (NADH) RutF (152 aa).

This sequence belongs to the non-flavoprotein flavin reductase family. RutF subfamily.

The catalysed reaction is FMNH2 + NAD(+) = FMN + NADH + 2 H(+). In terms of biological role, catalyzes the reduction of FMN to FMNH2 which is used to reduce pyrimidine by RutA via the Rut pathway. This chain is FMN reductase (NADH) RutF, found in Shigella dysenteriae serotype 1 (strain Sd197).